We begin with the raw amino-acid sequence, 1328 residues long: WASH complex subunit 2 (1328 aa).

Residues 1–219 form a sufficient for interaction with WASHC3, WASHC4 and WASHC5; required for interaction with WASHC1 region; the sequence is MNRTSPDSEQ…VGSDRGSIVD (219 aa). Ser157, Ser159, Ser204, Ser205, and Ser209 each carry phosphoserine. Residues 201-213 show a composition bias toward low complexity; sequence GELSSEEGSVGSD. Disordered stretches follow at residues 201-655 and 675-830; these read GELS…KTNL and KKTQ…PKST. Acidic residues-rich tracts occupy residues 219 to 231 and 248 to 273; these read DSED…ESDD and SDEE…EDIE. A Phosphoserine modification is found at Ser283. Positions 288-323 are enriched in basic and acidic residues; the sequence is LAARIKGDVSNQRKEGHTDGKPQRTVKEKKERRTPA. Thr321 is subject to Phosphothreonine. The tract at residues 346-592 is sufficient for interaction with CCDC93; it reads SRGGLFSDRQ…QTSSLPPQSQ (247 aa). The tract at residues 347-1328 is interaction with VPS35; sequence RGGLFSDRQG…DDPLNAFGSQ (982 aa). Positions 357-367 match the LFa 1 motif; it reads LFDDDDESDLF. Phosphoserine occurs at positions 384 and 387. 2 short sequence motifs (LFa) span residues 440–455 and 474–483; these read LFDD…DNFF and IFDDDEGDLF. Positions 441–453 are enriched in acidic residues; the sequence is FDDDDNDSDEDDN. Over residues 508–528 the composition is skewed to polar residues; sequence TITLPSSKNPKLVSETKTQKG. 2 short sequence motifs (LFa) span residues 529 to 540 and 564 to 575; these read LFSDEEDSEDLF and LFGDEDEEDNLF. A phosphoserine mark is found at Ser531 and Ser536. Over residues 539–556 the composition is skewed to low complexity; the sequence is LFSSQSSSKTKSASVLSS. The span at 582-592 shows a compositional bias: polar residues; the sequence is KQTSSLPPQSQ. 2 positions are modified to phosphoserine: Ser610 and Ser611. A compositionally biased stretch (basic and acidic residues) spans 627–638; sequence ASERKSKGERWD. 2 short sequence motifs (LFa) span residues 655–667 and 683–695; these read LFEE…VDLF and LFED…SSLF. Polar residues predominate over residues 690–699; that stretch reads SGSSLFSLPP. Residues Ser720, Ser744, Ser749, Ser780, and Ser795 each carry the phosphoserine modification. Residues 797-808 show a composition bias toward acidic residues; it reads FDEDEDKVEDDS. Short sequence motifs (LFa) lie at residues 832-840 and 849-855; these read VFQDEELLF and DPDVDLF. 2 disordered regions span residues 863-940 and 991-1088; these read LSMP…EPSS and PTLP…AMAV. 2 positions are modified to phosphoserine: Ser867 and Ser870. The short motif at 871–881 is the LFa 10 element; that stretch reads LFGDDDDDDLF. Residues 894 to 919 are compositionally biased toward basic and acidic residues; sequence PEKKGTLRKDHKPPELTEGSKEKSTW. The tract at residues 925–1328 is interaction with phospholipids; the sequence is QDSSGLTPFK…DDPLNAFGSQ (404 aa). Residues 1016-1034 show a composition bias toward basic residues; that stretch reads NKGRVKVRGKRRPQTRAAR. The interval 1017–1035 is required for interaction with F-actin-capping protein subunit alpha (CAPZA1 or CAPZA2 or CAPZA3); it reads KGRVKVRGKRRPQTRAARR. Phosphoserine occurs at positions 1042, 1060, 1077, and 1102. The segment at 1115–1210 is disordered; sequence AHLFDSGDIF…KKNQWKSDSH (96 aa). 3 short sequence motifs (LFa) span residues 1117 to 1124, 1157 to 1171, and 1187 to 1195; these read LFDSGDIF, VFPD…DDLF, and LLEDEEDLF. 2 positions are modified to phosphoserine: Ser1162 and Ser1165. Residues 1196–1210 show a composition bias toward basic and acidic residues; the sequence is ADQKGKKNQWKSDSH. 3 consecutive short sequence motifs (LFa) follow at residues 1220-1226, 1249-1257, and 1277-1286; these read IFEDDIF, LFDDNIDIF, and MFDDDTDDIF. The disordered stretch occupies residues 1289 to 1310; sequence GLQAKASKPKSQSAEAVSELRS. The LFa 17 signature appears at 1317-1325; the sequence is IFDDPLNAF. The residue at position 1327 (Ser1327) is a Phosphoserine.

This sequence belongs to the FAM21 family. Component of the WASH core complex also described as WASH regulatory complex (SHRC) composed of WASHC1, WASHC2, WASHC3, WASHC4 and WASHC5; in the complex interacts (via N-terminus) directly with WASHC1. The WASH core complex associates with the F-actin-capping protein dimer (formed by CAPZA1, CAPZA2 or CAPZA3 and CAPZB) in a transient or substoichiometric manner which was initially described as WASH complex. Interacts with VPS35; mediates the association with the retromer CSC complex. Interacts with FKBP15. Interacts with CCDC93, CCDC22, VPS35L; indicative for an association of the WASH core complex with the CCC and retriever complexes. Directly interacts with TBC1D23.

It is found in the early endosome membrane. The protein localises to the cell membrane. Acts as a component of the WASH core complex that functions as a nucleation-promoting factor (NPF) at the surface of endosomes, where it recruits and activates the Arp2/3 complex to induce actin polymerization, playing a key role in the fission of tubules that serve as transport intermediates during endosome sorting. Mediates the recruitment of the WASH core complex to endosome membranes via binding to phospholipids and VPS35 of the retromer CSC. Mediates the recruitment of the F-actin-capping protein dimer to the WASH core complex probably promoting localized F-actin polymerization needed for vesicle scission. Via its C-terminus binds various phospholipids, most strongly phosphatidylinositol 4-phosphate (PtdIns-(4)P), phosphatidylinositol 5-phosphate (PtdIns-(5)P) and phosphatidylinositol 3,5-bisphosphate (PtdIns-(3,5)P2). Involved in the endosome-to-plasma membrane trafficking and recycling of SNX27-retromer-dependent cargo proteins, such as GLUT1. Required for the association of DNAJC13, ENTR1, ANKRD50 with retromer CSC subunit VPS35. Required for the endosomal recruitment of CCC and retriever complexes subunits COMMD1 and CCDC93 as well as the retrievere complex subunit VPS35L. The chain is WASH complex subunit 2 from Rattus norvegicus (Rat).